The chain runs to 302 residues: Ribosomal protein L11 methyltransferase (302 aa).

S-adenosyl-L-methionine contacts are provided by Thr-155, Gly-176, Asp-198, and Asn-239.

This sequence belongs to the methyltransferase superfamily. PrmA family.

It localises to the cytoplasm. The enzyme catalyses L-lysyl-[protein] + 3 S-adenosyl-L-methionine = N(6),N(6),N(6)-trimethyl-L-lysyl-[protein] + 3 S-adenosyl-L-homocysteine + 3 H(+). Its function is as follows. Methylates ribosomal protein L11. This Caldicellulosiruptor saccharolyticus (strain ATCC 43494 / DSM 8903 / Tp8T 6331) protein is Ribosomal protein L11 methyltransferase.